The sequence spans 310 residues: Serine/threonine-protein phosphatase 4 catalytic subunit (310 aa).

Mn(2+) contacts are provided by Asp-53, His-55, Asp-81, and Asn-113. The active-site Proton donor is the His-114. Residues His-163 and His-237 each coordinate Mn(2+). Leu-310 is modified (leucine methyl ester).

This sequence belongs to the PPP phosphatase family. PP-4 (PP-X) subfamily. As to quaternary structure, catalytic subunit of the histone H2A phosphatase complex (HTP-C) containing PPH3, PSY2 and PSY4. Mn(2+) is required as a cofactor.

Its subcellular location is the cytoplasm. It is found in the nucleus. It catalyses the reaction O-phospho-L-seryl-[protein] + H2O = L-seryl-[protein] + phosphate. The enzyme catalyses O-phospho-L-threonyl-[protein] + H2O = L-threonyl-[protein] + phosphate. Its function is as follows. Involved in the dephosphorylation and activation of the transcription factor GLN3 in response to nutrient availability. Forms the histone H2A phosphatase complex in association with the regulatory subunits PSY2 and PSY4, which dephosphorylates H2AS128ph (gamma-H2A) that has been displaced from sites of DNA lesions in the double-stranded DNA break repair process. Dephosphorylation is necessary for efficient recovery from the DNA damage checkpoint. The polypeptide is Serine/threonine-protein phosphatase 4 catalytic subunit (PPH3) (Eremothecium gossypii (strain ATCC 10895 / CBS 109.51 / FGSC 9923 / NRRL Y-1056) (Yeast)).